A 95-amino-acid chain; its full sequence is Protein YY1 (95 aa).

The signal sequence occupies residues 1-26 (MAVTRTALLVVLVAGAMTMTMRGAEA). 4 disulfides stabilise this stretch: Cys-31–Cys-72, Cys-41–Cys-61, Cys-62–Cys-87, and Cys-74–Cys-94.

This sequence belongs to the A9/FIL1 family. As to expression, anther.

The protein localises to the secreted. The chain is Protein YY1 from Oryza sativa subsp. japonica (Rice).